The primary structure comprises 101 residues: Large ribosomal subunit protein bL21 (101 aa).

Belongs to the bacterial ribosomal protein bL21 family. Part of the 50S ribosomal subunit. Contacts protein L20.

In terms of biological role, this protein binds to 23S rRNA in the presence of protein L20. This chain is Large ribosomal subunit protein bL21, found in Metamycoplasma arthritidis (strain 158L3-1) (Mycoplasma arthritidis).